Reading from the N-terminus, the 1108-residue chain is cGMP-inhibited 3',5'-cyclic phosphodiesterase 3B (1108 aa).

The span at 1-11 (MRKDERERDTP) shows a compositional bias: basic and acidic residues. A disordered region spans residues 1-32 (MRKDERERDTPAMRSPPPPPPPATATAASPPE). The segment at 1 to 32 (MRKDERERDTPAMRSPPPPPPPATATAASPPE) is interaction with RAPGEF3. The segment covering 14–23 (RSPPPPPPPA) has biased composition (pro residues). Ser15 bears the Phosphoserine mark. The next 6 membrane-spanning stretches (helical) occupy residues 73-93 (AGAR…LLGA), 114-134 (LSLS…CFLT), 144-164 (AGSW…FAAW), 175-195 (AAAA…LTLA), 204-224 (VLVL…LGAL), and 231-251 (LLSC…DHFF). The residue at position 279 (Ser279) is a Phosphoserine; by PKB/AKT1 or PKB/AKT2. 2 positions are modified to phosphoserine: Ser280 and Ser427. Positions 405–448 (DRKLHKGLSSKPSFPTAQLRRSSGASGLLTSEHHSRWDRSGGKR) are disordered. Over residues 414–433 (SKPSFPTAQLRRSSGASGLL) the composition is skewed to polar residues. Residues 421 to 445 (AQLRRSSGASGLLTSEHHSRWDRSG) form an interaction with PIK3R6 region. The span at 435-445 (SEHHSRWDRSG) shows a compositional bias: basic and acidic residues. A PDEase domain is found at 633-1070 (PNIDQEVLLD…KIWKEIIEEE (438 aa)). The active-site Proton donor is His719. Position 719 (His719) interacts with AMP. Mg(2+)-binding residues include His723, His803, Asp804, and Asp919. AMP is bound by residues Asp804, Asp919, and Gln970. Positions 999 to 1033 (EEGDDTESDDDDDDDDDDDDDDDEELDSDDEETED) are enriched in acidic residues. The tract at residues 999-1042 (EEGDDTESDDDDDDDDDDDDDDDEELDSDDEETEDNLNPKPQRR) is disordered.

Belongs to the cyclic nucleotide phosphodiesterase family. PDE3 subfamily. Homodimer. Interacts with PIK3CG; regulates PDE3B activity and thereby cAMP levels in cells. Interacts with RAPGEF3 and PIK3R6; form a signaling complex that regulates phosphatidylinositol 3-kinase gamma in angiogenesis. Interacts with ABHD15; this interaction regulates PDE3B's stability and expression and, thereby, impacts the antilipolytic action of insulin. It depends on Mg(2+) as a cofactor. The cofactor is Mn(2+). Phosphorylation at Ser-279 mediates insulin-induced activation of PDE3B. In terms of tissue distribution, abundant in adipose tissues.

The protein localises to the membrane. It catalyses the reaction a nucleoside 3',5'-cyclic phosphate + H2O = a nucleoside 5'-phosphate + H(+). It carries out the reaction 3',5'-cyclic AMP + H2O = AMP + H(+). The enzyme catalyses 3',5'-cyclic GMP + H2O = GMP + H(+). Its activity is regulated as follows. Inhibited by cGMP. Cyclic nucleotide phosphodiesterase with a dual-specificity for the second messengers cAMP and cGMP, which are key regulators of many important physiological processes. Regulates angiogenesis by inhibiting the cAMP-dependent guanine nucleotide exchange factor RAPGEF3 and downstream phosphatidylinositol 3-kinase gamma-mediated signaling. Controls cardiac contractility by reducing cAMP concentration in cardiocytes. The chain is cGMP-inhibited 3',5'-cyclic phosphodiesterase 3B from Rattus norvegicus (Rat).